We begin with the raw amino-acid sequence, 275 residues long: Formamidopyrimidine-DNA glycosylase (275 aa).

Catalysis depends on Pro2, which acts as the Schiff-base intermediate with DNA. The active-site Proton donor is Glu3. Lys58 acts as the Proton donor; for beta-elimination activity in catalysis. Residues His91, Arg109, and Arg154 each coordinate DNA. An FPG-type zinc finger spans residues 240–274 (AVYERAGLPCRVCGAPIRRLVQGQRATYFCPSCQK). The Proton donor; for delta-elimination activity role is filled by Arg264.

It belongs to the FPG family. In terms of assembly, monomer. The cofactor is Zn(2+).

It carries out the reaction Hydrolysis of DNA containing ring-opened 7-methylguanine residues, releasing 2,6-diamino-4-hydroxy-5-(N-methyl)formamidopyrimidine.. The enzyme catalyses 2'-deoxyribonucleotide-(2'-deoxyribose 5'-phosphate)-2'-deoxyribonucleotide-DNA = a 3'-end 2'-deoxyribonucleotide-(2,3-dehydro-2,3-deoxyribose 5'-phosphate)-DNA + a 5'-end 5'-phospho-2'-deoxyribonucleoside-DNA + H(+). Its function is as follows. Involved in base excision repair of DNA damaged by oxidation or by mutagenic agents. Acts as a DNA glycosylase that recognizes and removes damaged bases. Has a preference for oxidized purines, such as 7,8-dihydro-8-oxoguanine (8-oxoG). Has AP (apurinic/apyrimidinic) lyase activity and introduces nicks in the DNA strand. Cleaves the DNA backbone by beta-delta elimination to generate a single-strand break at the site of the removed base with both 3'- and 5'-phosphates. The protein is Formamidopyrimidine-DNA glycosylase of Bordetella parapertussis (strain 12822 / ATCC BAA-587 / NCTC 13253).